The sequence spans 1549 residues: FERM and PDZ domain-containing protein 1 (1549 aa).

The PDZ domain maps to Thr-57–Thr-135. Residues Asn-181–Ala-496 enclose the FERM domain. Disordered regions lie at residues Ala-554–Asp-618, Ser-717–Trp-738, Tyr-775–Ser-834, Ser-913–Ile-1046, Ser-1097–Glu-1174, Leu-1231–Pro-1257, and Pro-1321–Gln-1347. Residues Ser-717–Arg-730 are compositionally biased toward polar residues. The interval Glu-924 to Lys-931 is important for interaction with GPSM2. Residues Pro-950–Gly-961 are compositionally biased toward polar residues. The span at Ser-962–Pro-980 shows a compositional bias: low complexity. Residues Ser-1117–Asp-1130 are compositionally biased toward basic and acidic residues.

In terms of assembly, interacts with GPSM1. Interacts with GPSM2.

Its subcellular location is the cytoplasm. The protein resides in the cytosol. The protein localises to the cell membrane. Stabilizes membrane-bound GPSM1, and thereby promotes its interaction with GNAI1. In Mus musculus (Mouse), this protein is FERM and PDZ domain-containing protein 1 (Frmpd1).